Reading from the N-terminus, the 1872-residue chain is Plexin-A3 (1872 aa).

An N-terminal signal peptide occupies residues 1 to 19 (MPTVCLLPLLFFTIGGCLG). Residues 20-489 (SSRPFRTFVV…SEKQVSQLPV (470 aa)) enclose the Sema domain. The Extracellular portion of the chain corresponds to 20 to 1220 (SSRPFRTFVV…ITADRALTLP (1201 aa)). N-linked (GlcNAc...) asparagine glycosylation is present at Asn-60. 9 disulfide bridges follow: Cys-78-Cys-87, Cys-113-Cys-121, Cys-267-Cys-388, Cys-283-Cys-339, Cys-357-Cys-376, Cys-492-Cys-509, Cys-498-Cys-540, Cys-501-Cys-518, and Cys-512-Cys-524. The N-linked (GlcNAc...) asparagine glycan is linked to Asn-549. Cys-575 and Cys-595 form a disulfide bridge. IPT/TIG domains are found at residues 841 to 934 (PRIT…YSFV), 936 to 1021 (PTFD…YTYT), 1024 to 1123 (PTVT…FTYY), and 1126 to 1212 (PSFE…LHIT). An N-linked (GlcNAc...) asparagine glycan is attached at Asn-1163. A helical membrane pass occupies residues 1221-1241 (AMVGLAAGGGLLLLAITVVLV). Positions 1240 to 1294 (LVAYKRKTQDADRTLKRLQLQMDNLESRVALECKEAFAELQTDINELTNHMDGVQ) form a coiled coil. Residues 1242-1872 (AYKRKTQDAD…QIITLVSSSS (631 aa)) lie on the Cytoplasmic side of the membrane. Ser-1597 is subject to Phosphoserine.

Belongs to the plexin family. As to expression, detected in embryonic hindbrain, spinal cord, dorsal root ganglion, trigeminal ganglion and superior cervical ganglion. In newborns, detected throughout all layers of the hippocampus.

The protein localises to the cell membrane. Functionally, coreceptor for SEMA3A and SEMA3F. Necessary for signaling by class 3 semaphorins and subsequent remodeling of the cytoskeleton. Plays a role in axon guidance in the developing nervous system. Regulates the migration of sympathetic neurons, but not of neural crest precursors. Required for normal dendrite spine morphology in pyramidal neurons. May play a role in regulating semaphorin-mediated programmed cell death in the developing nervous system. Class 3 semaphorins bind to a complex composed of a neuropilin and a plexin. The plexin modulates the affinity of the complex for specific semaphorins, and its cytoplasmic domain is required for the activation of down-stream signaling events in the cytoplasm. This is Plexin-A3 (Plxna3) from Mus musculus (Mouse).